Reading from the N-terminus, the 293-residue chain is Ribosomal protein L11 methyltransferase (293 aa).

T145, G166, D188, and N230 together coordinate S-adenosyl-L-methionine.

This sequence belongs to the methyltransferase superfamily. PrmA family.

It is found in the cytoplasm. It catalyses the reaction L-lysyl-[protein] + 3 S-adenosyl-L-methionine = N(6),N(6),N(6)-trimethyl-L-lysyl-[protein] + 3 S-adenosyl-L-homocysteine + 3 H(+). Functionally, methylates ribosomal protein L11. The protein is Ribosomal protein L11 methyltransferase of Shewanella halifaxensis (strain HAW-EB4).